A 204-amino-acid polypeptide reads, in one-letter code: Urease accessory protein UreG (204 aa).

13 to 20 (GPVGSGKT) contacts GTP.

The protein belongs to the SIMIBI class G3E GTPase family. UreG subfamily. Homodimer. UreD, UreF and UreG form a complex that acts as a GTP-hydrolysis-dependent molecular chaperone, activating the urease apoprotein by helping to assemble the nickel containing metallocenter of UreC. The UreE protein probably delivers the nickel.

It localises to the cytoplasm. Functionally, facilitates the functional incorporation of the urease nickel metallocenter. This process requires GTP hydrolysis, probably effectuated by UreG. The polypeptide is Urease accessory protein UreG (Acinetobacter baumannii (strain AB307-0294)).